The primary structure comprises 65 residues: Large ribosomal subunit protein bL32 (65 aa).

Residues 1 to 19 (MAVQKSRKTPSKRGMRRSH) show a composition bias toward basic residues. The tract at residues 1-32 (MAVQKSRKTPSKRGMRRSHNALTNPTLSEDQE) is disordered.

This sequence belongs to the bacterial ribosomal protein bL32 family.

The sequence is that of Large ribosomal subunit protein bL32 from Ruthia magnifica subsp. Calyptogena magnifica.